We begin with the raw amino-acid sequence, 494 residues long: Endoglucanase 1 (494 aa).

The signal sequence occupies residues 1–25 (MDCSSPLSLFHLLLVCTVMVKCCSA). The active-site Nucleophile is the Asp82. N-linked (GlcNAc...) asparagine glycans are attached at residues Asn254 and Asn359. Residues His411, Asp462, and Glu471 contribute to the active site.

Belongs to the glycosyl hydrolase 9 (cellulase E) family.

It catalyses the reaction Endohydrolysis of (1-&gt;4)-beta-D-glucosidic linkages in cellulose, lichenin and cereal beta-D-glucans.. Involved in ripening fruit process. The sequence is that of Endoglucanase 1 (CEL1) from Persea americana (Avocado).